Reading from the N-terminus, the 206-residue chain is Small ribosomal subunit protein uS4 (206 aa).

Positions 96 to 156 (GRLDNVVYRM…EKAKKQSRVK (61 aa)) constitute an S4 RNA-binding domain.

This sequence belongs to the universal ribosomal protein uS4 family. As to quaternary structure, part of the 30S ribosomal subunit. Contacts protein S5. The interaction surface between S4 and S5 is involved in control of translational fidelity.

Functionally, one of the primary rRNA binding proteins, it binds directly to 16S rRNA where it nucleates assembly of the body of the 30S subunit. With S5 and S12 plays an important role in translational accuracy. This Klebsiella pneumoniae (strain 342) protein is Small ribosomal subunit protein uS4.